Consider the following 124-residue polypeptide: Small ribosomal subunit protein uS12 (124 aa).

Position 89 is a 3-methylthioaspartic acid (aspartate 89).

Belongs to the universal ribosomal protein uS12 family. In terms of assembly, part of the 30S ribosomal subunit. Contacts proteins S8 and S17. May interact with IF1 in the 30S initiation complex.

In terms of biological role, with S4 and S5 plays an important role in translational accuracy. Its function is as follows. Interacts with and stabilizes bases of the 16S rRNA that are involved in tRNA selection in the A site and with the mRNA backbone. Located at the interface of the 30S and 50S subunits, it traverses the body of the 30S subunit contacting proteins on the other side and probably holding the rRNA structure together. The combined cluster of proteins S8, S12 and S17 appears to hold together the shoulder and platform of the 30S subunit. The protein is Small ribosomal subunit protein uS12 of Shewanella sediminis (strain HAW-EB3).